Consider the following 114-residue polypeptide: T cell receptor beta variable 6-1 (114 aa).

Positions 1-21 are cleaved as a signal peptide; it reads MSIGLLCCVAFSLLWASPVNA. In terms of domain architecture, Ig-like spans 22-114; sequence GVTQTPKFQV…TSVYFCASSE (93 aa). Cys42 and Cys110 are oxidised to a cystine. Asn84 is a glycosylation site (N-linked (GlcNAc...) asparagine).

In terms of assembly, alpha-beta TR is a heterodimer composed of an alpha and beta chain; disulfide-linked. The alpha-beta TR is associated with the transmembrane signaling CD3 coreceptor proteins to form the TR-CD3 (TcR or TCR). The assembly of alpha-beta TR heterodimers with CD3 occurs in the endoplasmic reticulum where a single alpha-beta TR heterodimer associates with one CD3D-CD3E heterodimer, one CD3G-CD3E heterodimer and one CD247 homodimer forming a stable octameric structure. CD3D-CD3E and CD3G-CD3E heterodimers preferentially associate with TR alpha and TR beta chains, respectively. The association of the CD247 homodimer is the last step of TcR assembly in the endoplasmic reticulum and is required for transport to the cell surface.

The protein localises to the cell membrane. Functionally, v region of the variable domain of T cell receptor (TR) beta chain that participates in the antigen recognition. Alpha-beta T cell receptors are antigen specific receptors which are essential to the immune response and are present on the cell surface of T lymphocytes. Recognize peptide-major histocompatibility (MH) (pMH) complexes that are displayed by antigen presenting cells (APC), a prerequisite for efficient T cell adaptive immunity against pathogens. Binding of alpha-beta TR to pMH complex initiates TR-CD3 clustering on the cell surface and intracellular activation of LCK that phosphorylates the ITAM motifs of CD3G, CD3D, CD3E and CD247 enabling the recruitment of ZAP70. In turn ZAP70 phosphorylates LAT, which recruits numerous signaling molecules to form the LAT signalosome. The LAT signalosome propagates signal branching to three major signaling pathways, the calcium, the mitogen-activated protein kinase (MAPK) kinase and the nuclear factor NF-kappa-B (NF-kB) pathways, leading to the mobilization of transcription factors that are critical for gene expression and essential for T cell growth and differentiation. The T cell repertoire is generated in the thymus, by V-(D)-J rearrangement. This repertoire is then shaped by intrathymic selection events to generate a peripheral T cell pool of self-MH restricted, non-autoaggressive T cells. Post-thymic interaction of alpha-beta TR with the pMH complexes shapes TR structural and functional avidity. The sequence is that of T cell receptor beta variable 6-1 from Homo sapiens (Human).